The sequence spans 480 residues: Sestrin-2 (480 aa).

An N-acetylmethionine modification is found at Met1. The interval 20–43 (RGGVAGPETREEHREGQARRGSRG) is disordered. The span at 27-37 (ETREEHREGQA) shows a compositional bias: basic and acidic residues. Residues 66-239 (GLEALMSSGR…APSPPSEQGT (174 aa)) form an N-terminal domain; mediates the alkylhydroperoxide reductase activity region. The active-site Cysteine sulfenic acid (-SOH) intermediate is the Cys125. A Glycyl lysine isopeptide (Lys-Gly) (interchain with G-Cter in ubiquitin) cross-link involves residue Lys175. 2 disordered regions span residues 221-251 (DAEG…NSGG) and 272-291 (LLRD…ELEK). Residues 223 to 238 (EGSPASQAPSPPSEQG) are compositionally biased toward low complexity. Ser249 is subject to Phosphoserine. The tract at residues 308–480 (PHPDILCFVE…ALRAITRYMT (173 aa)) is C-terminal domain; mediates TORC1 regulation. L-leucine contacts are provided by residues 374-377 (TYNT), Thr386, and Glu451.

This sequence belongs to the sestrin family. As to quaternary structure, interacts with the GATOR2 complex which is composed of MIOS, SEC13, SEH1L, WDR24 and WDR59; the interaction is negatively regulated by leucine. Conveys leucine availability via direct interaction with SEH1L and WDR24 components of the GATOR2 complex. Interacts with RRAGA, RRAGB, RRAGC and RRAGD; may function as a guanine nucleotide dissociation inhibitor for RRAGs and regulate them. May interact with the TORC2 complex. Interacts with KEAP1, RBX1, SQSTM and ULK1; to regulate the degradation of KEAP1. May also associate with the complex composed of TSC1, TSC2 and the AMP-responsive protein kinase/AMPK to regulate TORC1 signaling. May interact with PRDX1. Post-translationally, phosphorylated by ULK1 at multiple sites. Ubiquitinated at Lys-175 by RNF167 via 'Lys-63'-linked polyubiquitination in response to leucine deprivation: ubiquitination promotes SESN2-interaction with the GATOR2 complex, leading to inhibit the TORC1 signaling pathway. Deubiquitinated at Lys-175 by STAMBPL1, promoting the TORC1 signaling pathway. Ubiquitinated by RNF186; ubiquitination mediates proteasomal degradation. In terms of tissue distribution, detected in heart, liver and skeletal muscles (at protein level).

It localises to the cytoplasm. It carries out the reaction a hydroperoxide + L-cysteinyl-[protein] = S-hydroxy-L-cysteinyl-[protein] + an alcohol. Its function is as follows. Functions as an intracellular leucine sensor that negatively regulates the mTORC1 signaling pathway through the GATOR complex. In absence of leucine, binds the GATOR subcomplex GATOR2 and prevents mTORC1 signaling. Binding of leucine to SESN2 disrupts its interaction with GATOR2 thereby activating the TORC1 signaling pathway. This stress-inducible metabolic regulator also plays a role in protection against oxidative and genotoxic stresses. May negatively regulate protein translation in response to endoplasmic reticulum stress, via mTORC1. May positively regulate the transcription by NFE2L2 of genes involved in the response to oxidative stress by facilitating the SQSTM1-mediated autophagic degradation of KEAP1. May also mediate TP53 inhibition of TORC1 signaling upon genotoxic stress. Moreover, may prevent the accumulation of reactive oxygen species (ROS) through the alkylhydroperoxide reductase activity born by the N-terminal domain of the protein. Was originally reported to contribute to oxidative stress resistance by reducing PRDX1. However, this could not be confirmed. In Mus musculus (Mouse), this protein is Sestrin-2.